The chain runs to 250 residues: Methylthioribulose-1-phosphate dehydratase (250 aa).

The Zn(2+) site is built by His-103 and His-105.

It belongs to the aldolase class II family. MtnB subfamily. Requires Zn(2+) as cofactor.

The enzyme catalyses 5-(methylsulfanyl)-D-ribulose 1-phosphate = 5-methylsulfanyl-2,3-dioxopentyl phosphate + H2O. The protein operates within amino-acid biosynthesis; L-methionine biosynthesis via salvage pathway; L-methionine from S-methyl-5-thio-alpha-D-ribose 1-phosphate: step 2/6. In terms of biological role, catalyzes the dehydration of methylthioribulose-1-phosphate (MTRu-1-P) into 2,3-diketo-5-methylthiopentyl-1-phosphate (DK-MTP-1-P). The sequence is that of Methylthioribulose-1-phosphate dehydratase from Leptospira borgpetersenii serovar Hardjo-bovis (strain JB197).